Reading from the N-terminus, the 294-residue chain is tRNA pseudouridine synthase B (294 aa).

Asp-39 (nucleophile) is an active-site residue.

This sequence belongs to the pseudouridine synthase TruB family. Type 1 subfamily.

The catalysed reaction is uridine(55) in tRNA = pseudouridine(55) in tRNA. Its function is as follows. Responsible for synthesis of pseudouridine from uracil-55 in the psi GC loop of transfer RNAs. The protein is tRNA pseudouridine synthase B of Streptococcus pyogenes serotype M28 (strain MGAS6180).